Consider the following 830-residue polypeptide: MAPQPLKVGTSKLSKMVKSAPKTAGKSKKRAVEQVSEESDEEFGDQGSGIDMSDDEEEVDGDDEEDEDEAFPEFDSELEDNDQEEASDEEQDEQDTSDESEIVEEDSDSESGYNTSDIERMYASDDDLSSEENKDLPVDEKLSRLIAKNTVKPDDSIGTDDKISRAKEGVGRLVPSKHVKGSFVREYDEYEAGYGSESSTEDNPNTVGNIPMEWYDDLPHIGYDVNGRKIFRPLQGDELDKFLANVEDPSAWTSAEDKLLQQNVQLSDKELDIIRRLERAENPDADFDPYQPTIEWFTGEGKERVMPLSAAPEPKRRFVPSKWEHKKIMKIVKAIREGRIIPNKPSAEKPRFYPIWSDADQHNPHVMYMPAPQLPPPKTAESYNPPEEYLPTEEEKAEWEAMDKEDRKTDFLPEKYDALRKVPGYKNLVQEKFERCLDLYLAPRTRRVKLNIDPDSLIPKLPAPKELKPFPIASTVQYRHPGDTRVRSVSTSPDGQWIASGSEDGVVRVWDLGNGREVWRWDLHAGPIQYVEWSPSREESLLVALVAGKIAVLSPLALVAPHIAAQTLTHSNTAFATSSATTKQGAGNEVKGIESVKWTRPSERERERGVLVYVEVPGTPKQVTWHRKGDYFATVASDAANKSVLIHQLSRHGSQSPFRKTPGTIQRVAFHPSKPHFFAATQRYIRLYDLAAQKLIRTLQSGVKWISSMDVHSGGDNLIIGSYDKKLAWFDMDLSAKPYKTLRYHNRALRSVAYHPTLPLFASASDDGTVHIFHCTVYTDLMQNPLIVPLKILRGHKVIDGIGVLDLRWVPGKPWLVSSGADGEVRLWCS.

The disordered stretch occupies residues 1–141 (MAPQPLKVGT…ENKDLPVDEK (141 aa)). Composition is skewed to acidic residues over residues 35-44 (VSEESDEEFG) and 52-109 (MSDD…DSDS). Positions 131 to 141 (EENKDLPVDEK) are enriched in basic and acidic residues. WD repeat units follow at residues 481–520 (PGDTRVRSVSTSPDGQWIASGSEDGVVRVWDLGNGREVWR), 523–563 (LHAG…APHI), 660–698 (KTPGTIQRVAFHPSKPHFFAATQRYIRLYDLAAQKLIRT), 701–740 (SGVKWISSMDVHSGGDNLIIGSYDKKLAWFDMDLSAKPYK), 744–783 (YHNRALRSVAYHPTLPLFASASDDGTVHIFHCTVYTDLMQ), and 799–830 (IDGIGVLDLRWVPGKPWLVSSGADGEVRLWCS).

This sequence belongs to the WD repeat BOP1/ERB1 family. In terms of assembly, component of the NOP7 complex, composed of ERB1, NOP7 and YTM1. The complex is held together by ERB1, which interacts with NOP7 via its N-terminal domain and with YTM1 via a high-affinity interaction between the seven-bladed beta-propeller domains of the 2 proteins. The NOP7 complex associates with the 66S pre-ribosome.

The protein localises to the nucleus. It localises to the nucleolus. The protein resides in the nucleoplasm. In terms of biological role, component of the NOP7 complex, which is required for maturation of the 25S and 5.8S ribosomal RNAs and formation of the 60S ribosome. The protein is Ribosome biogenesis protein ERB1 of Cryptococcus neoformans var. neoformans serotype D (strain B-3501A) (Filobasidiella neoformans).